The sequence spans 1065 residues: Presequence protease, mitochondrial (1065 aa).

The transit peptide at 1 to 42 (MLRSFSGAGKCKCRIPVSRQPVCGRSLRISSTLTPWNQSRRA) directs the protein to the mitochondrion. Residue His117 coordinates Zn(2+). Glu120 (proton acceptor) is an active-site residue. Position 121 (His121) interacts with Zn(2+). Glu193 is an active-site residue. Glu230 is a binding site for Zn(2+).

This sequence belongs to the peptidase M16 family. PreP subfamily. As to quaternary structure, monomer and homodimer; homodimerization is induced by binding of the substrate. Zn(2+) serves as cofactor.

It is found in the mitochondrion intermembrane space. Its subcellular location is the mitochondrion matrix. In terms of biological role, degrades mitochondrial transit peptides after their cleavage in the intermembrane space or in the matrix, and presequence peptides; clearance of these peptides is required to keep the presequence processing machinery running. Preferentially cleaves the N-terminal side of paired basic amino acid residues. Also degrades other unstructured peptides. May function as an ATP-dependent peptidase as opposed to a metalloendopeptidase. This chain is Presequence protease, mitochondrial (cym1), found in Aspergillus fumigatus (strain ATCC MYA-4609 / CBS 101355 / FGSC A1100 / Af293) (Neosartorya fumigata).